A 511-amino-acid polypeptide reads, in one-letter code: Ribose import ATP-binding protein RbsA (511 aa).

ABC transporter domains lie at 9-245 (FEAK…VGRD) and 261-506 (LRAE…LPRR). 41–48 (GENGAGKS) contributes to the ATP binding site.

The protein belongs to the ABC transporter superfamily. Ribose importer (TC 3.A.1.2.1) family. The complex is composed of an ATP-binding protein (RbsA), two transmembrane proteins (RbsC) and a solute-binding protein (RbsB).

The protein localises to the cell inner membrane. The catalysed reaction is D-ribose(out) + ATP + H2O = D-ribose(in) + ADP + phosphate + H(+). Part of the ABC transporter complex RbsABC involved in ribose import. Responsible for energy coupling to the transport system. This chain is Ribose import ATP-binding protein RbsA, found in Rhodopirellula baltica (strain DSM 10527 / NCIMB 13988 / SH1).